Consider the following 147-residue polypeptide: uncharacterized protein (147 aa).

Positions 1-137 constitute an HTH marR-type domain; the sequence is MRDNTIGSLI…LYELMTKVHK (137 aa). Residues 53-76 constitute a DNA-binding region (H-T-H motif); that stretch reads QMELAEKVTVTQGGISRMLTRLEK.

This is an uncharacterized protein from Bacillus cereus (strain ATCC 10987 / NRS 248).